A 120-amino-acid polypeptide reads, in one-letter code: NAD(P)H-quinone oxidoreductase subunit 3, chloroplastic (120 aa).

The next 3 helical transmembrane spans lie at 9–29 (IFWTFLIIASLIPILAFWISG), 64–84 (MFALVFVVFDVETVFLYPWAM), and 88–108 (VLGVSVFIEAFIFVLILVVGL).

The protein belongs to the complex I subunit 3 family. NDH is composed of at least 16 different subunits, 5 of which are encoded in the nucleus.

It is found in the plastid. The protein localises to the chloroplast thylakoid membrane. It catalyses the reaction a plastoquinone + NADH + (n+1) H(+)(in) = a plastoquinol + NAD(+) + n H(+)(out). The catalysed reaction is a plastoquinone + NADPH + (n+1) H(+)(in) = a plastoquinol + NADP(+) + n H(+)(out). Functionally, NDH shuttles electrons from NAD(P)H:plastoquinone, via FMN and iron-sulfur (Fe-S) centers, to quinones in the photosynthetic chain and possibly in a chloroplast respiratory chain. The immediate electron acceptor for the enzyme in this species is believed to be plastoquinone. Couples the redox reaction to proton translocation, and thus conserves the redox energy in a proton gradient. The protein is NAD(P)H-quinone oxidoreductase subunit 3, chloroplastic of Agrostis stolonifera (Creeping bentgrass).